Reading from the N-terminus, the 145-residue chain is uncharacterized protein (145 aa).

A signal peptide spans 1 to 20 (MKTCTVICCTALVLGLTAYA).

This is an uncharacterized protein from Aedes vexans (Inland floodwater mosquito).